Reading from the N-terminus, the 101-residue chain is NAD(P)H-quinone oxidoreductase subunit 4L, chloroplastic (101 aa).

3 consecutive transmembrane segments (helical) span residues 2-22, 32-52, and 61-81; these read MTEYVLILSAYLFSIGIYGLI, MCLELILNAVNMNLVTFSDLF, and IFSIFVIAIAAAEAAIGPAIV.

This sequence belongs to the complex I subunit 4L family. In terms of assembly, NDH is composed of at least 16 different subunits, 5 of which are encoded in the nucleus.

It localises to the plastid. It is found in the chloroplast thylakoid membrane. It carries out the reaction a plastoquinone + NADH + (n+1) H(+)(in) = a plastoquinol + NAD(+) + n H(+)(out). The enzyme catalyses a plastoquinone + NADPH + (n+1) H(+)(in) = a plastoquinol + NADP(+) + n H(+)(out). NDH shuttles electrons from NAD(P)H:plastoquinone, via FMN and iron-sulfur (Fe-S) centers, to quinones in the photosynthetic chain and possibly in a chloroplast respiratory chain. The immediate electron acceptor for the enzyme in this species is believed to be plastoquinone. Couples the redox reaction to proton translocation, and thus conserves the redox energy in a proton gradient. This Calycanthus floridus var. glaucus (Eastern sweetshrub) protein is NAD(P)H-quinone oxidoreductase subunit 4L, chloroplastic.